The following is an 84-amino-acid chain: Acetylcholine receptor subunit alpha (84 aa).

2 cysteine pairs are disulfide-bonded: C7/C21 and C71/C72. N-linked (GlcNAc...) asparagine glycosylation is present at N20.

It belongs to the ligand-gated ion channel (TC 1.A.9) family. Acetylcholine receptor (TC 1.A.9.1) subfamily. Alpha-1/CHRNA1 sub-subfamily. One of the alpha chains that assemble within the acetylcholine receptor, a pentamer of two alpha chains, a beta, a delta, and a gamma (in immature muscle) or epsilon (in mature muscle) chains. The muscle heteropentamer composed of alpha-1, beta-1, delta, epsilon subunits interacts with the alpha-conotoxin ImII.

The protein resides in the postsynaptic cell membrane. It is found in the cell membrane. The catalysed reaction is K(+)(in) = K(+)(out). It carries out the reaction Na(+)(in) = Na(+)(out). Functionally, upon acetylcholine binding, the AChR responds by an extensive change in conformation that affects all subunits and leads to opening of an ion-conducting channel across the plasma membrane. The chain is Acetylcholine receptor subunit alpha (CHRNA1) from Crocidura russula (Greater white-toothed shrew).